The primary structure comprises 71 residues: uncharacterized protein (71 aa).

The N-terminal stretch at 1–26 is a signal peptide; sequence MIKFSVILGMIRCSLTHITTKNTVNA.

This is an uncharacterized protein from Bacillus subtilis (strain 168).